Consider the following 147-residue polypeptide: Large ribosomal subunit protein uL15 (147 aa).

Residues 1-11 (MKLHDLRPAKD) show a composition bias toward basic and acidic residues. Residues 1-57 (MKLHDLRPAKDAKKKRKRVGRGTGSGRGFTSGRGSKGQNARSGGGVRPTFEGGQTPL) are disordered. A compositionally biased stretch (gly residues) spans 21–35 (RGTGSGRGFTSGRGS).

This sequence belongs to the universal ribosomal protein uL15 family. Part of the 50S ribosomal subunit.

Binds to the 23S rRNA. The sequence is that of Large ribosomal subunit protein uL15 from Halothermothrix orenii (strain H 168 / OCM 544 / DSM 9562).